The primary structure comprises 88 residues: Phosphocarrier protein HPr (88 aa).

The HPr domain maps to 1–88 (MAQKTFTVTA…DTMSKEGLGE (88 aa)). At Ser12 the chain carries Phosphoserine. The Pros-phosphohistidine intermediate role is filled by His15. At Ser46 the chain carries Phosphoserine; by HPrK/P.

The protein belongs to the HPr family.

Its subcellular location is the cytoplasm. Phosphorylation on Ser-46 inhibits the phosphoryl transfer from enzyme I to HPr. Its function is as follows. General (non sugar-specific) component of the phosphoenolpyruvate-dependent sugar phosphotransferase system (sugar PTS). This major carbohydrate active-transport system catalyzes the phosphorylation of incoming sugar substrates concomitantly with their translocation across the cell membrane. The phosphoryl group from phosphoenolpyruvate (PEP) is transferred to the phosphoryl carrier protein HPr by enzyme I. Phospho-HPr then transfers it to the PTS EIIA domain. Functionally, P-Ser-HPr interacts with the catabolite control protein A (CcpA), forming a complex that binds to DNA at the catabolite response elements cre, operator sites preceding a large number of catabolite-regulated genes. Thus, P-Ser-HPr is a corepressor in carbon catabolite repression (CCR), a mechanism that allows bacteria to coordinate and optimize the utilization of available carbon sources. P-Ser-HPr also plays a role in inducer exclusion, in which it probably interacts with several non-PTS permeases and inhibits their transport activity. This chain is Phosphocarrier protein HPr (ptsH), found in Priestia megaterium (Bacillus megaterium).